Consider the following 132-residue polypeptide: Fluoride-specific ion channel FluC 2 (132 aa).

Transmembrane regions (helical) follow at residues 8–28, 41–61, 66–86, and 96–116; these read LQLE…GALL, LLVN…PAAP, LLGI…LAAV, and AALG…ALGF. Na(+)-binding residues include G73 and T76.

Belongs to the fluoride channel Fluc/FEX (TC 1.A.43) family.

The protein localises to the cell inner membrane. The catalysed reaction is fluoride(in) = fluoride(out). Na(+) is not transported, but it plays an essential structural role and its presence is essential for fluoride channel function. In terms of biological role, fluoride-specific ion channel. Important for reducing fluoride concentration in the cell, thus reducing its toxicity. In Synechococcus sp. (strain CC9605), this protein is Fluoride-specific ion channel FluC 2.